The primary structure comprises 66 residues: SGKGKGEKCTSACRSEPCQCGSKCQCGEGCTCAACKTCNCTSDGCKCGKECTGPDSCKCGSSCSCK.

Serine 1 carries the post-translational modification N-acetylserine. Positions 9, 13, 18, 20, 24, 26, 30, 32, 35, 38, 40, 45, 47, 51, 57, 59, 63, and 65 each coordinate Cd(2+).

It belongs to the metallothionein superfamily. Type 2 family.

Its function is as follows. The metallothioneins are involved in the cellular sequestration of toxic metal ions and regulation of essential trace elements. Binds almost exclusively cadmium. The chain is Cadmium-metallothionein from Helix pomatia (Roman snail).